Reading from the N-terminus, the 1128-residue chain is Major DNA-binding protein (1128 aa).

The interval 1104 to 1128 (LGGGGQGSGGRRKRRLATVLPGLEV) is required for nuclear localization.

The protein belongs to the herpesviridae major DNA-binding protein family. As to quaternary structure, homooligomers. Forms double-helical filaments necessary for the formation of replication compartments within the host nucleus. Interacts with the origin-binding protein. Interacts with the helicase primase complex; this interaction stimulates primer synthesis activity of the helicase-primase complex. Interacts with the DNA polymerase. Interacts with the alkaline exonuclease; this interaction increases its nuclease processivity.

The protein localises to the virion tegument. The protein resides in the host nucleus. In terms of biological role, plays several crucial roles in viral infection. Participates in the opening of the viral DNA origin to initiate replication by interacting with the origin-binding protein. May disrupt loops, hairpins and other secondary structures present on ssDNA to reduce and eliminate pausing of viral DNA polymerase at specific sites during elongation. Promotes viral DNA recombination by performing strand-transfer, characterized by the ability to transfer a DNA strand from a linear duplex to a complementary single-stranded DNA circle. Can also catalyze the renaturation of complementary single strands. Additionally, reorganizes the host cell nucleus, leading to the formation of prereplicative sites and replication compartments. This process is driven by the protein which can form double-helical filaments in the absence of DNA. The polypeptide is Major DNA-binding protein (Homo sapiens (Human)).